The chain runs to 445 residues: Tripartite motif-containing protein 43B (445 aa).

An RING-type zinc finger spans residues 16 to 57 (CSICQGIFMNPVYLKCGHKFCEACLLLFQEDIKFPAYCPMCM). The segment at 88–129 (SEEHKCVTHKAKKMIFCDKSKILLCHLCSDSQEHSGHTHCSI) adopts a B box-type zinc-finger fold. 4 residues coordinate Zn(2+): C93, H96, C115, and H121. In terms of domain architecture, B30.2/SPRY spans 271-445 (RLRAHSIPGL…VRPFFSAVYT (175 aa)).

This sequence belongs to the TRIM/RBCC family.

This is Tripartite motif-containing protein 43B from Mus musculus (Mouse).